We begin with the raw amino-acid sequence, 242 residues long: Carboxy-S-adenosyl-L-methionine synthase (242 aa).

Residues Tyr38, 63–65 (GCS), 88–89 (DN), 116–117 (DL), and Arg199 each bind S-adenosyl-L-methionine.

This sequence belongs to the class I-like SAM-binding methyltransferase superfamily. Cx-SAM synthase family. In terms of assembly, homodimer.

The enzyme catalyses prephenate + S-adenosyl-L-methionine = carboxy-S-adenosyl-L-methionine + 3-phenylpyruvate + H2O. Functionally, catalyzes the conversion of S-adenosyl-L-methionine (SAM) to carboxy-S-adenosyl-L-methionine (Cx-SAM). This Methylococcus capsulatus (strain ATCC 33009 / NCIMB 11132 / Bath) protein is Carboxy-S-adenosyl-L-methionine synthase.